The following is a 765-amino-acid chain: Zinc metalloproteinase nas-37 (765 aa).

The signal sequence occupies residues 1–22 (MKSQACLKVCLALIGLVSIVST). Positions 23 to 114 (AYIANDVVSD…SESNSPRSRR (92 aa)) are excised as a propeptide. Residues 115 to 308 (QAHPDPRNFW…AKMINTRYCS (194 aa)) form the Peptidase M12A domain. An N-linked (GlcNAc...) asparagine glycan is attached at Asn126. Intrachain disulfides connect Cys156–Cys307, Cys177–Cys196, Cys311–Cys331, Cys333–Cys342, Cys350–Cys374, and Cys400–Cys420. Residue His204 coordinates Zn(2+). Residue Glu205 is part of the active site. 2 residues coordinate Zn(2+): His208 and His214. An EGF-like domain is found at 303 to 343 (NTRYCSNVCQRSLPCLNEGYTDPNNCGRCRCPSGYGGTYCE). Residues 350–458 (CGGSLTASSS…RGFTLKYRAI (109 aa)) enclose the CUB domain. Residues 513–573 (KYSSEELYDP…TRPTPTTTVA (61 aa)) form a disordered region. Composition is skewed to low complexity over residues 526–545 (LSPS…DASP) and 562–573 (ALTRPTPTTTVA). The 52-residue stretch at 576–627 (TASWSAWGEWSACSQPCGGCGTKTRVRACYGGNQVCPGSNLDRESCNAHACA) folds into the TSP type-1 domain. 3 cysteine pairs are disulfide-bonded: Cys588/Cys621, Cys592/Cys626, and Cys604/Cys611.

It depends on Zn(2+) as a cofactor. As to expression, expressed in hypodermal cells. Not expressed in the seam cells in L1 to L3 larvae, but it is present in seam cells of L4 larvae. Also expressed in attachment points of the cuticle at the anterior end of larvae, in the arcade cells in the mouth, the anterior pharynx, the amphid socket cells, and in the rectal epithelial cells at the posterior end of the larvae (at protein level).

Its subcellular location is the secreted. Metalloprotease. Plays an essential role in molting, a process during larval stages in which a new cuticle is formed and the old cuticle is shed. Required during ecdysis, the opening of the cuticle to allow the worm to escape. This chain is Zinc metalloproteinase nas-37 (nas-37), found in Caenorhabditis elegans.